Consider the following 718-residue polypeptide: Manganese-exporting P-type ATPase (718 aa).

The HMA domain maps to 11-78 (GRMRVKVDWV…AIKGAAHVAA (68 aa)). 6 consecutive transmembrane segments (helical) span residues 87 to 105 (HSAE…GGVA), 128 to 146 (TVAT…RGAL), 154 to 168 (AGTD…VASL), 177 to 191 (LTVL…YLQD), 327 to 351 (VGEN…LITG), and 357 to 375 (MTML…TPTA). Asp-408 functions as the 4-aspartylphosphate intermediate in the catalytic mechanism. Mg(2+) is bound by residues Asp-408, Thr-410, and Asp-610. A run of 2 helical transmembrane segments spans residues 661–680 (AVDV…AAGL) and 690–709 (PVLA…ANSS).

Belongs to the cation transport ATPase (P-type) (TC 3.A.3) family. Type IB subfamily.

The protein resides in the cell membrane. It carries out the reaction Mn(2+)(in) + ATP + H2O = Mn(2+)(out) + ADP + phosphate + H(+). High affinity, slow turnover Mn(2+) transporting ATPase. The chain is Manganese-exporting P-type ATPase (ctpC) from Mycobacterium bovis (strain ATCC BAA-935 / AF2122/97).